We begin with the raw amino-acid sequence, 301 residues long: MLGRVTGKVLAYIALTKPRVIELLLVATIPAMLLADRGNVDIALILSTLFGGWMGAASANSLNCVVDADIDKVMKRTARRPLARDAVPTSHAFVFGMTLGVASFLWLWWRANLLAGCLVVLTIAFYVLVYTMVLKRRTWQNVVWGGAAGCMPVMVGWSAVTGSLSWQPIVLFLVIFFWTPPHTWALAMRYKEDYKAAGVPMLPVIATEEHVTKQILLYSWAMVITSLTLVPAAGVVYAAVTLVAGAWFLLMAHQLYRSVRGGAAVKPLRLFLQSNNYLAVVFVGLAVDSVLGLQTVGSLLS.

The next 9 helical transmembrane spans lie at 9-29 (VLAY…VATI), 42-62 (IALI…ANSL), 89-109 (TSHA…WLWW), 113-133 (LLAG…YTMV), 142-162 (VVWG…AVTG), 168-188 (PIVL…ALAM), 211-231 (VTKQ…TLVP), 232-252 (AAGV…LLMA), and 280-300 (VVFV…GSLL).

Belongs to the UbiA prenyltransferase family. Protoheme IX farnesyltransferase subfamily.

It localises to the cell membrane. The enzyme catalyses heme b + (2E,6E)-farnesyl diphosphate + H2O = Fe(II)-heme o + diphosphate. Its pathway is porphyrin-containing compound metabolism; heme O biosynthesis; heme O from protoheme: step 1/1. Its function is as follows. Converts heme B (protoheme IX) to heme O by substitution of the vinyl group on carbon 2 of heme B porphyrin ring with a hydroxyethyl farnesyl side group. The sequence is that of Protoheme IX farnesyltransferase from Rhodococcus jostii (strain RHA1).